Reading from the N-terminus, the 283-residue chain is Cyclin-C (283 aa).

A Cyclin N-terminal domain is found at 46-144 (NVIQALGEHL…VLECEFYLLE (99 aa)). The segment at 252 to 283 (TILSKMPKPKPPPNSEGEQGPNGSQNSSYSQS) is disordered. The segment covering 272–283 (PNGSQNSSYSQS) has biased composition (polar residues). Ser-275 carries the post-translational modification Phosphoserine.

Belongs to the cyclin family. Cyclin C subfamily. As to quaternary structure, component of the Mediator complex, which is composed of MED1, MED4, MED6, MED7, MED8, MED9, MED10, MED11, MED12, MED13, MED13L, MED14, MED15, MED16, MED17, MED18, MED19, MED20, MED21, MED22, MED23, MED24, MED25, MED26, MED27, MED29, MED30, MED31, CCNC, CDK8 and CDC2L6/CDK11. The MED12, MED13, CCNC and CDK8 subunits form a distinct module termed the CDK8 module. Mediator containing the CDK8 module is less active than Mediator lacking this module in supporting transcriptional activation. Individual preparations of the Mediator complex lacking one or more distinct subunits have been variously termed ARC, CRSP, DRIP, PC2, SMCC and TRAP. The cylin/CDK pair formed by CCNC/CDK8 also associates with the large subunit of RNA polymerase II.

It is found in the nucleus. In terms of biological role, component of the Mediator complex, a coactivator involved in regulated gene transcription of nearly all RNA polymerase II-dependent genes. Mediator functions as a bridge to convey information from gene-specific regulatory proteins to the basal RNA polymerase II transcription machinery. Mediator is recruited to promoters by direct interactions with regulatory proteins and serves as a scaffold for the assembly of a functional preinitiation complex with RNA polymerase II and the general transcription factors. Binds to and activates cyclin-dependent kinase CDK8 that phosphorylates the CTD (C-terminal domain) of the large subunit of RNA polymerase II (RNAp II), which may inhibit the formation of a transcription initiation complex. This is Cyclin-C (CCNC) from Bos taurus (Bovine).